A 227-amino-acid polypeptide reads, in one-letter code: Enolase-phosphatase E1 (227 aa).

Residues Asp11 and Glu13 each contribute to the Mg(2+) site. Residues 118–119 and Lys161 contribute to the substrate site; that span reads SS. Asp186 contributes to the Mg(2+) binding site.

The protein belongs to the HAD-like hydrolase superfamily. MasA/MtnC family. As to quaternary structure, monomer. Mg(2+) serves as cofactor.

It is found in the cytoplasm. Its subcellular location is the nucleus. It catalyses the reaction 5-methylsulfanyl-2,3-dioxopentyl phosphate + H2O = 1,2-dihydroxy-5-(methylsulfanyl)pent-1-en-3-one + phosphate. It functions in the pathway amino-acid biosynthesis; L-methionine biosynthesis via salvage pathway; L-methionine from S-methyl-5-thio-alpha-D-ribose 1-phosphate: step 3/6. The protein operates within amino-acid biosynthesis; L-methionine biosynthesis via salvage pathway; L-methionine from S-methyl-5-thio-alpha-D-ribose 1-phosphate: step 4/6. Its function is as follows. Bifunctional enzyme that catalyzes the enolization of 2,3-diketo-5-methylthiopentyl-1-phosphate (DK-MTP-1-P) into the intermediate 2-hydroxy-3-keto-5-methylthiopentenyl-1-phosphate (HK-MTPenyl-1-P), which is then dephosphorylated to form the acireductone 1,2-dihydroxy-3-keto-5-methylthiopentene (DHK-MTPene). In Saccharomyces cerevisiae (strain JAY291) (Baker's yeast), this protein is Enolase-phosphatase E1.